Reading from the N-terminus, the 310-residue chain is Basic salivary proline-rich protein 4 (310 aa).

The signal sequence occupies residues 1 to 16 (MLLILLSVALLALSSA). A disordered region spans residues 14–310 (SSAESSSEDV…RPAQGQQPPQ (297 aa)). Tandem repeats lie at residues 35-55 (KPEG…PPPG), 56-76 (KPQG…PPPG), 77-97 (KPEG…PHPG), 98-118 (KPER…PHPG), 119-139 (KPES…PTPG), 140-160 (KPEG…PPPG), 161-181 (KPEG…PHPG), 182-202 (KPER…PPPG), and 203-223 (KPER…PHPG). Positions 35–234 (KPEGRRPQGG…PEGPPPQEGN (200 aa)) are 9.5 X 21 AA tandem repeats of K-P-[EQ]-[GR]-[PR]-[PR]-P-Q-G-G-N-Q-[PS]-[QH]-[RG]-[PT]-P-P-[PH]-P-G. Pro residues predominate over residues 48–63 (QRPPPPPGKPQGPPPQ). N-linked (GlcNAc...) asparagine glycosylation is found at Asn66, Asn87, and Asn108. Residues 133–147 (GPPPTPGKPEGPPPQ) show a composition bias toward pro residues. 3 N-linked (GlcNAc...) asparagine glycosylation sites follow: Asn150, Asn171, and Asn192. The segment covering 196–210 (RPPPPPGKPERPPPQ) has biased composition (pro residues). The N-linked (GlcNAc...) asparagine glycan is linked to Asn213. The span at 217 to 231 (GPPPHPGKPEGPPPQ) shows a compositional bias: pro residues. Residues 224 to 234 (KPEGPPPQEGN) form a 10; truncated repeat. N-linked (GlcNAc...) asparagine glycosylation occurs at Asn234. The span at 258–310 (QGPPPPGKPQGPPPAGGNPQQPQAPPAGKPQGPPPPPQGGRPPRPAQGQQPPQ) shows a compositional bias: pro residues.

Post-translationally, N-glycosylated. Proteolytically cleaved at the tripeptide Xaa-Pro-Gln, where Xaa in the P(3) position is mostly lysine. The endoprotease may be of microbial origin. Pyroglutamate formation found on at least Gln-46, Gln-48, Gln-67, Gln-88; Gln-90; Gln-193; Gln-288 Gln-214 and Gln-295, preferentially in diabetic, and head and neck cancer patients.

It is found in the secreted. The chain is Basic salivary proline-rich protein 4 (PRB4) from Homo sapiens (Human).